The chain runs to 589 residues: L-fucose isomerase (589 aa).

Catalysis depends on proton acceptor residues Glu-340 and Asp-364. Residues Glu-340, Asp-364, and His-527 each contribute to the Mn(2+) site.

Belongs to the L-fucose isomerase family. Mn(2+) serves as cofactor.

It localises to the cytoplasm. It catalyses the reaction L-fucose = L-fuculose. Its pathway is carbohydrate degradation; L-fucose degradation; L-lactaldehyde and glycerone phosphate from L-fucose: step 1/3. Converts the aldose L-fucose into the corresponding ketose L-fuculose. The polypeptide is L-fucose isomerase (Haemophilus influenzae (strain PittEE)).